We begin with the raw amino-acid sequence, 435 residues long: Tol-Pal system protein TolB (435 aa).

A signal peptide spans 1–20 (MRKIIAGVFIFVFLISNLYA).

The protein belongs to the TolB family. The Tol-Pal system is composed of five core proteins: the inner membrane proteins TolA, TolQ and TolR, the periplasmic protein TolB and the outer membrane protein Pal. They form a network linking the inner and outer membranes and the peptidoglycan layer.

It is found in the periplasm. Its function is as follows. Part of the Tol-Pal system, which plays a role in outer membrane invagination during cell division and is important for maintaining outer membrane integrity. The chain is Tol-Pal system protein TolB from Francisella tularensis subsp. mediasiatica (strain FSC147).